Here is a 115-residue protein sequence, read N- to C-terminus: Large ribosomal subunit protein bL20 (115 aa).

The protein belongs to the bacterial ribosomal protein bL20 family.

Its function is as follows. Binds directly to 23S ribosomal RNA and is necessary for the in vitro assembly process of the 50S ribosomal subunit. It is not involved in the protein synthesizing functions of that subunit. This chain is Large ribosomal subunit protein bL20, found in Bdellovibrio bacteriovorus (strain ATCC 15356 / DSM 50701 / NCIMB 9529 / HD100).